Reading from the N-terminus, the 565-residue chain is Oxygen-dependent choline dehydrogenase (565 aa).

Position 7–36 (7–36 (DYIICGAGSAGNVLATRLTEDPGVTVLLLE)) interacts with FAD. The Proton acceptor role is filled by H474.

This sequence belongs to the GMC oxidoreductase family. It depends on FAD as a cofactor.

It catalyses the reaction choline + A = betaine aldehyde + AH2. The catalysed reaction is betaine aldehyde + NAD(+) + H2O = glycine betaine + NADH + 2 H(+). Its pathway is amine and polyamine biosynthesis; betaine biosynthesis via choline pathway; betaine aldehyde from choline (cytochrome c reductase route): step 1/1. Functionally, involved in the biosynthesis of the osmoprotectant glycine betaine. Catalyzes the oxidation of choline to betaine aldehyde and betaine aldehyde to glycine betaine at the same rate. The protein is Oxygen-dependent choline dehydrogenase of Burkholderia pseudomallei (strain K96243).